The chain runs to 269 residues: Proline-rich protein 7 (269 aa).

The Extracellular portion of the chain corresponds to 1 to 9 (MVMSQGTYT). The interval 1–44 (MVMSQGTYTFLTCFAGFWLIWGLIVLLCCFCSFLRRRLKRRQEE) is required for interaction with NMDA receptors. The required for membrane localization stretch occupies residues 2–39 (VMSQGTYTFLTCFAGFWLIWGLIVLLCCFCSFLRRRLK). Residues 10-30 (FLTCFAGFWLIWGLIVLLCCF) form a helical; Signal-anchor for type III membrane protein membrane-spanning segment. Over 31–269 (CSFLRRRLKR…IPLFGRTTAV (239 aa)) the chain is Cytoplasmic. S64 bears the Phosphoserine mark. Disordered regions lie at residues 64–83 (SLAG…RSRL) and 98–128 (LLHH…LSVP). Basic residues predominate over residues 108–117 (AHPHPHHHAL). The segment covering 118–128 (PHPPPSHLSVP) has biased composition (pro residues). Residues 146–166 (PCYEEAVLMAEPPPPYSEVLT) form a required for internalization region. The tract at residues 146 to 269 (PCYEEAVLMA…IPLFGRTTAV (124 aa)) is required for apoptosis induction. The short motif at 267 to 269 (TAV) is the PDZ-binding element.

In terms of assembly, forms a complex with NMDA receptor zeta subunit GRIN1 and epsilon subunit GRIN2B. Interacts with GRIN2B. Interacts with GRIN1; the interaction is reduced upon NMDA receptor activity. Found in a postsynaptic membrane complex with DLG4 and GRIN1. Interacts with DLG4 (via PDZ3 domain and to lesser degree via PDZ2 domain). Interacts with FBXW7. Found in a complex with JUN and FBXW7. Interacts with JUN and FBXW7; the interaction inhibits ubiquitination-mediated JUN degradation promoting its phosphorylation and transcriptional activity. Interacts with SRC. Post-translationally, palmitoylated. Tyrosine phosphorylated, possibly by SRC. As to expression, expressed in brain. Expressed in the cerebral cortex and especially in hippocampal neural cells (at protein level).

The protein localises to the cell membrane. The protein resides in the postsynaptic cell membrane. Its subcellular location is the postsynaptic density membrane. It is found in the cytoplasm. It localises to the perinuclear region. The protein localises to the synapse. The protein resides in the cell projection. Its subcellular location is the dendrite. It is found in the nucleus. Its function is as follows. Acts as a synapse-to-nucleus messenger to promote NMDA receptor-mediated excitotoxicity in neurons in a JUN-dependent manner. Inhibits ubiquitination-mediated degradation and promotes phosphorylation and transcriptional activity of transcription factor JUN. Might play a redundant role in the regulation of T cell receptor signaling. Might promote apoptosis in T cells. The chain is Proline-rich protein 7 (Prr7) from Rattus norvegicus (Rat).